Consider the following 262-residue polypeptide: Versicolorin reductase 1 (262 aa).

Positions 21, 67, 94, and 127 each coordinate NADP(+). Residues Ser-143 and Ser-144 each act as proton donor in the active site. 4 residues coordinate NADP(+): Tyr-158, Lys-162, Ile-191, and Thr-193. Catalysis depends on Tyr-158, which acts as the Proton acceptor. The active-site Lowers pKa of active site Tyr is Lys-162.

Belongs to the short-chain dehydrogenases/reductases (SDR) family.

Its subcellular location is the cytoplasm. It localises to the cytosol. It carries out the reaction (4S,8R)-2,13,16,20-tetrahydroxy-7,9-dioxapentacyclo[10.8.0.0(3,10).0(4,8).0(14,19)]icosa-1(12),2,5,10,13,16,19-heptaen-18-one + NADPH + H(+) = (4S,8R,16R)-2,13,16,20-tetrahydroxy-7,9-dioxapentacyclo[10.8.0.0(3,10).0(4,8).0(14,19)]icosa-1(12),2,5,10,13,19-hexaen-18-one + NADP(+). It participates in mycotoxin biosynthesis; aflatoxin biosynthesis. Cytochrome P450 monooxygenase; part of the gene cluster that mediates the biosynthesis of aflatoxins, a group of polyketide-derived furanocoumarins, and part of the most toxic and carcinogenic compounds among the known mycotoxins. The four major aflatoxins produced by A.parasiticus are aflatoxin B1 (AFB1), aflatoxin B2 (AFB2), aflatoxin G1 (AFG1) and aflatoxin G2 (AFG2). Within the aflatoxin pathway, with the cytochrome P450 monooxygenase aflN, the versicolorin reductase aflM, is involved in conversion of VERA to demethylsterigmatocystin (DMST). The biosynthesis of aflatoxins begins with the norsolorinic acid synthase aflC that combines a hexanoyl starter unit produced by the fatty acid synthase aflA/aflB and 7 malonyl-CoA extender units to synthesize the precursor NOR. The second step is the conversion of NOR to averantin and requires the norsolorinic acid ketoreductase aflD, which catalyzes the dehydration of norsolorinic acid to form (1'S)-averantin. The norsolorinic acid reductases aflE and aflF may also play a role in the conversion of NOR to AVN. The cytochrome P450 monooxygenase aflG then catalyzes the hydroxylation of AVN to 5'hydroxyaverantin (HAVN). The next step is performed by the 5'-hydroxyaverantin dehydrogenase aflH that transforms HAVN to 5'-oxoaverantin (OAVN) which is further converted to averufin (AVF) by aflK that plays a dual role in the pathway, as a 5'-oxoaverantin cyclase that mediates conversion of 5'-oxoaverantin, as well as a versicolorin B synthase in a later step in the pathway. The averufin oxidase aflI catalyzes the conversion of AVF to versiconal hemiacetal acetate (VHA). VHA is then the substrate for the versiconal hemiacetal acetate esterase aflJ to yield versiconal (VAL). Versicolorin B synthase aflK then converts VAL to versicolorin B (VERB) by closing the bisfuran ring of aflatoxin which is required for DNA-binding, thus giving to aflatoxin its activity as a mutagen. Then, the activity of the versicolorin B desaturase aflL leads to versicolorin A (VERA). A branch point starts from VERB since it can also be converted to dihydrodemethylsterigmatocystin (DMDHST), probably also by aflL, VERA being a precursor for aflatoxins B1 and G1, and DMDHST for aflatoxins B2 and G2. Next, the versicolorin reductase aflM and the cytochrome P450 monooxygenase aflN are involved in conversion of VERA to demethylsterigmatocystin (DMST). AflX and aflY seem also involved in this step, through probable aflX-mediated epoxide ring-opening step following versicolorin A oxidation and aflY-mediated Baeyer-Villiger oxidation required for the formation of the xanthone ring. The methyltransferase aflO then leads to the modification of DMST to sterigmatocystin (ST), and of DMDHST to dihydrosterigmatocystin (DHST). Both ST and DHST are then substrates of the O-methyltransferase aflP to yield O-methylsterigmatocystin (OMST) and dihydro-O-methylsterigmatocystin (DHOMST), respectively. Finally OMST is converted to aflatoxins B1 and G1, and DHOMST to aflatoxins B2 and G2, via the action of several enzymes including O-methylsterigmatocystin oxidoreductase aflQ, the cytochrome P450 monooxygenase aflU, but also the NADH-dependent flavin oxidoreductase nadA which is specifically required for the synthesis of AFG1. This Aspergillus parasiticus (strain ATCC 56775 / NRRL 5862 / SRRC 143 / SU-1) protein is Versicolorin reductase 1.